A 263-amino-acid polypeptide reads, in one-letter code: Indole-3-glycerol phosphate synthase (263 aa).

Belongs to the TrpC family.

It carries out the reaction 1-(2-carboxyphenylamino)-1-deoxy-D-ribulose 5-phosphate + H(+) = (1S,2R)-1-C-(indol-3-yl)glycerol 3-phosphate + CO2 + H2O. The protein operates within amino-acid biosynthesis; L-tryptophan biosynthesis; L-tryptophan from chorismate: step 4/5. The chain is Indole-3-glycerol phosphate synthase from Sulfurimonas denitrificans (strain ATCC 33889 / DSM 1251) (Thiomicrospira denitrificans (strain ATCC 33889 / DSM 1251)).